Consider the following 470-residue polypeptide: Putative multidrug resistance protein MdtD (470 aa).

The Periplasmic segment spans residues 1 to 11; that stretch reads MTELPDNTRWQ. Residues 12-32 form a helical membrane-spanning segment; it reads LWIVAFGFFMQSLDTTIVNTA. At 33–48 the chain is on the cytoplasmic side; the sequence is LPSMAKSLGESPLHMH. A helical membrane pass occupies residues 49–69; sequence MVVVSYVLTVAVMLPASGWLA. The Periplasmic portion of the chain corresponds to 70–76; sequence DKIGVRN. A helical transmembrane segment spans residues 77 to 97; the sequence is IFFAAIVLFTLGSLFCALSGT. Topologically, residues 98 to 101 are cytoplasmic; it reads LNQL. The helical transmembrane segment at 102-124 threads the bilayer; the sequence is VLARVLQGVGGAMMVPVGRLTVM. Over 125-137 the chain is Periplasmic; the sequence is KIVPRAQYMAAMT. The chain crosses the membrane as a helical span at residues 138 to 158; sequence FVTLPGQIGPLLGPALGGVLV. At 159–164 the chain is on the cytoplasmic side; that stretch reads EYASWH. Residues 165 to 185 traverse the membrane as a helical segment; it reads WIFLINIPVGIVGAMATFMLM. The Periplasmic segment spans residues 186 to 196; the sequence is PNYIIETRRFD. The helical transmembrane segment at 197 to 217 threads the bilayer; it reads LPGFLLLAIGMAVLTLALDGS. Over 218 to 224 the chain is Cytoplasmic; that stretch reads KSMGISP. The helical transmembrane segment at 225–245 threads the bilayer; sequence WTLAGLAAGGAAAILLYLFHA. At 246 to 262 the chain is on the periplasmic side; sequence KKNSGALFSLRLFRTPT. Residues 263–283 form a helical membrane-spanning segment; the sequence is FSLGLLGSFAGRIGSGMLPFM. At 284 to 285 the chain is on the cytoplasmic side; it reads TP. Residues 286 to 306 form a helical membrane-spanning segment; that stretch reads VFLQIGLGFSPFHAGLMMIPM. The Periplasmic portion of the chain corresponds to 307 to 341; it reads VLGSMGMKRIVVQIVNRFGYRRVLVATTLGLALVS. A helical transmembrane segment spans residues 342–362; that stretch reads LLFMSVALLGWYYLLPLVLLL. At 363-395 the chain is on the cytoplasmic side; the sequence is QGMVNSARFSSMNTLTLKDLPDTLASSGNSLLS. The chain crosses the membrane as a helical span at residues 396-416; it reads MIMQLSMSIGVTIAGMLLGMF. Over 417-430 the chain is Periplasmic; that stretch reads GQQHIGIDSSATHH. A helical transmembrane segment spans residues 431–451; sequence VFMYTWLCMAVIIALPAIIFA. The Cytoplasmic portion of the chain corresponds to 452-470; it reads RVPNDTQQNMVISRRKRSL.

The protein belongs to the major facilitator superfamily. TCR/Tet family.

The protein localises to the cell inner membrane. This chain is Putative multidrug resistance protein MdtD, found in Salmonella typhimurium (strain LT2 / SGSC1412 / ATCC 700720).